The sequence spans 443 residues: ATP-dependent protease ATPase subunit HslU (443 aa).

Residues isoleucine 20, 62 to 67 (GVGKTE), aspartate 255, glutamate 321, and arginine 393 contribute to the ATP site.

Belongs to the ClpX chaperone family. HslU subfamily. A double ring-shaped homohexamer of HslV is capped on each side by a ring-shaped HslU homohexamer. The assembly of the HslU/HslV complex is dependent on binding of ATP.

It is found in the cytoplasm. Functionally, ATPase subunit of a proteasome-like degradation complex; this subunit has chaperone activity. The binding of ATP and its subsequent hydrolysis by HslU are essential for unfolding of protein substrates subsequently hydrolyzed by HslV. HslU recognizes the N-terminal part of its protein substrates and unfolds these before they are guided to HslV for hydrolysis. This chain is ATP-dependent protease ATPase subunit HslU, found in Helicobacter pylori (strain Shi470).